Consider the following 465-residue polypeptide: Probable glucan endo-1,3-beta-glucosidase eglC (465 aa).

The signal sequence occupies residues 1-19; the sequence is MFTKTQILALALSIASAEA. Glu-128 acts as the Proton donor in catalysis. Asn-183 is a glycosylation site (N-linked (GlcNAc...) asparagine). The Nucleophile role is filled by Glu-239. Asn-318 is a glycosylation site (N-linked (GlcNAc...) asparagine). Low complexity-rich tracts occupy residues 320 to 333 and 380 to 438; these read SSASASASGSSAQS and SPSA…ATPA. Disordered regions lie at residues 320 to 356 and 380 to 440; these read SSASASASGSSAQSTGFVSTTKPAASPSGSSGLGHGG and SPSA…PADF. Gly-442 is lipidated: GPI-anchor amidated glycine. The propeptide at 443–465 is removed in mature form; sequence AGSRLSGSIFGAAMLVAALAVAL.

It belongs to the glycosyl hydrolase 17 family. Post-translationally, the GPI-anchor is attached to the protein in the endoplasmic reticulum and serves to target the protein to the cell surface. There, the glucosamine-inositol phospholipid moiety is cleaved off and the GPI-modified mannoprotein is covalently attached via its lipidless GPI glycan remnant to the 1,6-beta-glucan of the outer cell wall layer.

The protein resides in the cell membrane. It localises to the secreted. Its subcellular location is the cell wall. It carries out the reaction Hydrolysis of (1-&gt;3)-beta-D-glucosidic linkages in (1-&gt;3)-beta-D-glucans.. Functionally, glucanases play a role in cell expansion during growth, in cell-cell fusion during mating, and in spore release during sporulation. This enzyme may be involved in beta-glucan degradation and also function biosynthetically as a transglycosylase. The polypeptide is Probable glucan endo-1,3-beta-glucosidase eglC (eglC) (Emericella nidulans (strain FGSC A4 / ATCC 38163 / CBS 112.46 / NRRL 194 / M139) (Aspergillus nidulans)).